A 104-amino-acid polypeptide reads, in one-letter code: Growth-regulated protein homolog alpha (104 aa).

The signal sequence occupies residues 1–30; it reads MAPAATAAAPRLLRAAMLFLLLVAAGRRAA. 2 disulfide bridges follow: Cys-40/Cys-66 and Cys-42/Cys-82.

It belongs to the intercrine alpha (chemokine CxC) family.

The protein resides in the secreted. This is Growth-regulated protein homolog alpha from Bos taurus (Bovine).